A 264-amino-acid chain; its full sequence is 3-methyl-2-oxobutanoate hydroxymethyltransferase (264 aa).

Positions 45 and 84 each coordinate Mg(2+). Residues 45–46 (DS), Asp84, and Lys112 contribute to the 3-methyl-2-oxobutanoate site. Residue Glu114 coordinates Mg(2+). The active-site Proton acceptor is Glu181.

It belongs to the PanB family. As to quaternary structure, homodecamer; pentamer of dimers. Requires Mg(2+) as cofactor.

It localises to the cytoplasm. The enzyme catalyses 3-methyl-2-oxobutanoate + (6R)-5,10-methylene-5,6,7,8-tetrahydrofolate + H2O = 2-dehydropantoate + (6S)-5,6,7,8-tetrahydrofolate. It functions in the pathway cofactor biosynthesis; (R)-pantothenate biosynthesis; (R)-pantoate from 3-methyl-2-oxobutanoate: step 1/2. In terms of biological role, catalyzes the reversible reaction in which hydroxymethyl group from 5,10-methylenetetrahydrofolate is transferred onto alpha-ketoisovalerate to form ketopantoate. The chain is 3-methyl-2-oxobutanoate hydroxymethyltransferase from Shewanella sp. (strain ANA-3).